The primary structure comprises 207 residues: Outer-membrane lipoprotein carrier protein (207 aa).

A signal peptide spans 1-23; sequence MMKPHNLFQFLAVCSLTVAVASA.

The protein belongs to the LolA family. In terms of assembly, monomer.

The protein localises to the periplasm. In terms of biological role, participates in the translocation of lipoproteins from the inner membrane to the outer membrane. Only forms a complex with a lipoprotein if the residue after the N-terminal Cys is not an aspartate (The Asp acts as a targeting signal to indicate that the lipoprotein should stay in the inner membrane). The polypeptide is Outer-membrane lipoprotein carrier protein (Neisseria gonorrhoeae (strain ATCC 700825 / FA 1090)).